We begin with the raw amino-acid sequence, 545 residues long: Protein disulfide isomerase-like 1-3 (545 aa).

The segment covering 1-16 (MWPRAPATPPPPPWPS) has biased composition (pro residues). The tract at residues 1–24 (MWPRAPATPPPPPWPSKPSAASRS) is disordered. The 135-residue stretch at 55–189 (ASSTAFAAAF…IVAYLKRQAG (135 aa)) folds into the Thioredoxin 1 domain. A glycan (N-linked (GlcNAc...) asparagine) is linked at Asn87. Active-site nucleophile residues include Cys107 and Cys110. A disulfide bridge links Cys107 with Cys110. N-linked (GlcNAc...) asparagine glycosylation occurs at Asn349. The 143-residue stretch at 403 to 545 (FTEGTLAPHV…TTTESVKDEL (143 aa)) folds into the Thioredoxin 2 domain. Catalysis depends on nucleophile residues Cys453 and Cys456. The cysteines at positions 453 and 456 are disulfide-linked. The Prevents secretion from ER motif lies at 542 to 545 (KDEL).

It belongs to the protein disulfide isomerase family.

It is found in the endoplasmic reticulum lumen. The enzyme catalyses Catalyzes the rearrangement of -S-S- bonds in proteins.. Its function is as follows. Acts as a protein-folding catalyst that interacts with nascent polypeptides to catalyze the formation, isomerization, and reduction or oxidation of disulfide bonds. May play a role in storage protein biogenesis. The polypeptide is Protein disulfide isomerase-like 1-3 (PDIL1-3) (Oryza sativa subsp. japonica (Rice)).